A 225-amino-acid polypeptide reads, in one-letter code: Cytochrome c oxidase subunit 2 (225 aa).

The Mitochondrial intermembrane segment spans residues 1–25; sequence MSTWMMFMFQESNSFYADNLVSFHN. A helical transmembrane segment spans residues 26 to 47; that stretch reads LVMMIIIMISTLTIYIIFDLFM. Residues 48-62 are Mitochondrial matrix-facing; it reads NKFSNLFLLKNHNIE. Residues 63 to 82 form a helical membrane-spanning segment; that stretch reads IIWTIVPIVILLIICFPSLK. Topologically, residues 83 to 225 are mitochondrial intermembrane; it reads ILYLIDEIIN…FFLNWINKQN (143 aa). Cu cation is bound by residues histidine 159, cysteine 194, glutamate 196, cysteine 198, histidine 202, and methionine 205. Glutamate 196 lines the Mg(2+) pocket.

It belongs to the cytochrome c oxidase subunit 2 family. As to quaternary structure, component of the cytochrome c oxidase (complex IV, CIV), a multisubunit enzyme composed of a catalytic core of 3 subunits and several supernumerary subunits. The complex exists as a monomer or a dimer and forms supercomplexes (SCs) in the inner mitochondrial membrane with ubiquinol-cytochrome c oxidoreductase (cytochrome b-c1 complex, complex III, CIII). The cofactor is Cu cation.

It is found in the mitochondrion inner membrane. The catalysed reaction is 4 Fe(II)-[cytochrome c] + O2 + 8 H(+)(in) = 4 Fe(III)-[cytochrome c] + 2 H2O + 4 H(+)(out). Its function is as follows. Component of the cytochrome c oxidase, the last enzyme in the mitochondrial electron transport chain which drives oxidative phosphorylation. The respiratory chain contains 3 multisubunit complexes succinate dehydrogenase (complex II, CII), ubiquinol-cytochrome c oxidoreductase (cytochrome b-c1 complex, complex III, CIII) and cytochrome c oxidase (complex IV, CIV), that cooperate to transfer electrons derived from NADH and succinate to molecular oxygen, creating an electrochemical gradient over the inner membrane that drives transmembrane transport and the ATP synthase. Cytochrome c oxidase is the component of the respiratory chain that catalyzes the reduction of oxygen to water. Electrons originating from reduced cytochrome c in the intermembrane space (IMS) are transferred via the dinuclear copper A center (CU(A)) of subunit 2 and heme A of subunit 1 to the active site in subunit 1, a binuclear center (BNC) formed by heme A3 and copper B (CU(B)). The BNC reduces molecular oxygen to 2 water molecules using 4 electrons from cytochrome c in the IMS and 4 protons from the mitochondrial matrix. This Apis koschevnikovi (Koschevnikov's honey bee) protein is Cytochrome c oxidase subunit 2 (COII).